The sequence spans 582 residues: DNA repair and recombination protein radC (582 aa).

The DNA-binding element occupies 146–150 (KRALR). Positions 194 to 204 (KKEPMRVKPSL) are enriched in basic and acidic residues. Disordered regions lie at residues 194 to 226 (KKEP…NSAA), 310 to 400 (QIPN…INGQ), and 485 to 582 (APSG…QHQH). Positions 326 to 335 (QNQYTNQRQS) are enriched in polar residues. The segment covering 516 to 529 (AAAQNNTAAANRMA) has biased composition (low complexity).

The protein belongs to the RAD52 family. Part of a complex that includes RAD51, RAD52 and RAD59.

The protein resides in the nucleus. In terms of biological role, involved in DNA double-strand break (DSB) repair and recombination. Promotes the annealing of complementary single-stranded DNA and by stimulation of the RAD51 recombinase. This chain is DNA repair and recombination protein radC (radC), found in Emericella nidulans (strain FGSC A4 / ATCC 38163 / CBS 112.46 / NRRL 194 / M139) (Aspergillus nidulans).